We begin with the raw amino-acid sequence, 187 residues long: GTP cyclohydrolase 1 (187 aa).

Zn(2+)-binding residues include Cys-79, His-82, and Cys-150.

This sequence belongs to the GTP cyclohydrolase I family. Toroid-shaped homodecamer, composed of two pentamers of five dimers.

The catalysed reaction is GTP + H2O = 7,8-dihydroneopterin 3'-triphosphate + formate + H(+). It participates in cofactor biosynthesis; 7,8-dihydroneopterin triphosphate biosynthesis; 7,8-dihydroneopterin triphosphate from GTP: step 1/1. This is GTP cyclohydrolase 1 from Fusobacterium nucleatum subsp. nucleatum (strain ATCC 25586 / DSM 15643 / BCRC 10681 / CIP 101130 / JCM 8532 / KCTC 2640 / LMG 13131 / VPI 4355).